The chain runs to 438 residues: Battenin (438 aa).

The interval 1-27 (MGSSAGSWRRLEDSEREETDSEPQAPR) is disordered. Residues 1 to 37 (MGSSAGSWRRLEDSEREETDSEPQAPRLDSRSVLWKN) are Cytoplasmic-facing. S14 carries the phosphoserine modification. The helical transmembrane segment at 38–58 (AVGFWILGLCNNFSYVVMLSA) threads the bilayer. Topologically, residues 59 to 127 (AHDILKQEQA…GLHLLPYSPR (69 aa)) are lumenal. The tract at residues 67 to 87 (QASGNQSHVEPGPTPTPHNSS) is disordered. N-linked (GlcNAc...) asparagine glycans are attached at residues N71 and N85. The chain crosses the membrane as a helical span at residues 128–148 (VLVSGVCSAGSFVLVAFSQSV). At 149–151 (GLS) the chain is on the cytoplasmic side. The chain crosses the membrane as a helical span at residues 152–172 (LCGVVLASISSGLGEVTFLSL). Over 173–182 (TAFYPSAVIS) the chain is Lumenal. The chain crosses the membrane as a helical span at residues 183–203 (WWSSGTGGAGLLGSLSYLGLT). Over 204–277 (QAGLSPQHTL…DLSLQERWTV (74 aa)) the chain is Cytoplasmic. A disordered region spans residues 239–261 (PGGENEAETAARQPLIGTETPES). The Lysosomal targeting motif motif lies at 242-244 (ENE). Positions 253–254 (LI) match the Lysosomal targeting motif. Required for AP1G1, AP2A2 and AP3D1 interaction motif. Residues 278–298 (FKGLLWYIIPLVLVYFAEYFI) traverse the membrane as a helical segment. Topologically, residues 299–346 (NQGLFELLFFRNTSLSHAQQYRWYQMLYQAGVFASRSSLQCCRIRFTW) are lumenal. Residue N310 is glycosylated (N-linked (GlcNAc...) asparagine). Residues 347–367 (VLALLQCLNLALLLADVCLNF) form a helical membrane-spanning segment. The Cytoplasmic segment spans residues 368–438 (LPSIYLIFII…PLHDFLCHLP (71 aa)). The Lysosomal targeting motif signature appears at 409–419 (MEAACISDTLG). At C435 the chain carries Cysteine methyl ester. C435 carries S-farnesyl cysteine lipidation. The propeptide at 436-438 (HLP) is removed in mature form.

The protein belongs to the battenin family. In terms of assembly, homooligomer. Interacts with DCTN1, KIF3A, RAB7A and RILP. Interacts with CLN5. Interacts with KCNIP3. In terms of processing, highly glycosylated. Post-translationally, farnesylation is important for trafficking to lysosomes. In terms of tissue distribution, expressed throughout the brain, such as, in the cerebral cortex, hippocampus, cerebellum and several different cerebral nuclei (at protein level). In the cerebral cortex, expressed in all cortical layers. In the hippocampus, expressed in the granule cells in the dentate gyrus and the pyramidal cells of the hippocampus proper. In the cerebellum expressed in the granular and molecular layers, and in the Purkinje cell layer.

It is found in the lysosome membrane. It localises to the late endosome. The protein resides in the lysosome. The protein localises to the membrane raft. Its subcellular location is the golgi apparatus. It is found in the trans-Golgi network. It localises to the synapse. The protein resides in the synaptosome. The protein localises to the early endosome membrane. Its subcellular location is the late endosome membrane. It is found in the cytoplasmic vesicle. It localises to the autophagosome. Functionally, mediates microtubule-dependent, anterograde transport connecting the Golgi network, endosomes, autophagosomes, lysosomes and plasma membrane, and participates in several cellular processes such as regulation of lysosomal pH, lysosome protein degradation, receptor-mediated endocytosis, autophagy, transport of proteins and lipids from the TGN, apoptosis and synaptic transmission. Facilitates the proteins transport from trans-Golgi network (TGN)-to other membrane compartments such as transport of microdomain-associated proteins to the plasma membrane, IGF2R transport to the lysosome where it regulates the CTSD release leading to regulation of CTSD maturation and thereby APP intracellular processing. Moreover regulates CTSD activity in response to osmotic stress. Also binds galactosylceramide and transports it from the trans Golgi to the rafts, which may have immediate and downstream effects on cell survival by modulating ceramide synthesis. At the plasma membrane, regulates actin-dependent events including filopodia formation, cell migration, and pinocytosis through ARF1-CDC42 pathway and also the cytoskeleton organization through interaction with MYH10 and fodrin leading to the regulation of the plasma membrane association of Na+, K+ ATPase complex. Regulates synaptic transmission in the amygdala, hippocampus, and cerebellum through regulation of synaptic vesicles density and their proximity to active zones leading to modulation of short-term plasticity and age-dependent anxious behavior, learning and memory. Regulates autophagic vacuoles (AVs) maturation by modulating the trafficking between endocytic and autophagolysosomal/lysosomal compartments, which involves vesicle fusion leading to regulation of degradation process. Also participates in cellular homeostasis of compounds such as, water, ions, amino acids, proteins and lipids in several tissue namely in brain and kidney through regulation of their transport and synthesis. This chain is Battenin, found in Mus musculus (Mouse).